We begin with the raw amino-acid sequence, 279 residues long: Pantothenate synthetase (279 aa).

An ATP-binding site is contributed by 26–33 (MGNLHDGH). His33 acts as the Proton donor in catalysis. Position 57 (Gln57) interacts with (R)-pantoate. Gln57 lines the beta-alanine pocket. Residue 144 to 147 (GKKD) participates in ATP binding. A (R)-pantoate-binding site is contributed by Gln150. 181–184 (LSSR) serves as a coordination point for ATP.

Belongs to the pantothenate synthetase family. In terms of assembly, homodimer.

Its subcellular location is the cytoplasm. The catalysed reaction is (R)-pantoate + beta-alanine + ATP = (R)-pantothenate + AMP + diphosphate + H(+). It functions in the pathway cofactor biosynthesis; (R)-pantothenate biosynthesis; (R)-pantothenate from (R)-pantoate and beta-alanine: step 1/1. Catalyzes the condensation of pantoate with beta-alanine in an ATP-dependent reaction via a pantoyl-adenylate intermediate. The sequence is that of Pantothenate synthetase from Janthinobacterium sp. (strain Marseille) (Minibacterium massiliensis).